Consider the following 503-residue polypeptide: MYRTAASRARALKGVLTRSLRPARYASSSAVAETSSSTPAYLSWLSGGSRAALTSLDMPLQGVSLPPPLADKVEPSKLQITTLPNGLKIASETTPNPAASIGLYVDCGSIYEAPYFHGATHLLERMAFKSTLNRTHFRLVREIEAIGGNTSASASREQMSYTIDALKTYVPEMVEVLIDSVRNPAFLDWEVNEELRKMKVEIAELAKNPMGFLLEAIHSAGYSGPLASPLYAPESALDRLNGELLEEFMTENFTAARMVLAASGVEHEELLKVAEPLTSDLPNVPPQLAPKSQYVGGDFRQHTGGEATHFAVAFEVPGWNNEKEAVTATVLQMLMGGGGSFSAGGPGKGMHSWLYRRVLNEYQEVQSCTAFTSIFNDTGLFGIYGCSSPQFAAKAIELAAKELKDVAGGKVNQAHLDRAKAATKSAVLMNLESRMIAAEDIGRQILTYGERKPVDQFLKSVDQLTLKDIADFTSKVISKPLTMGSFGDVLAVPSYDTISSKFR.

The N-terminal 59 residues, 1 to 59 (MYRTAASRARALKGVLTRSLRPARYASSSAVAETSSSTPAYLSWLSGGSRAALTSLDMP), are a transit peptide targeting the mitochondrion.

This sequence belongs to the peptidase M16 family. As to quaternary structure, heterodimer of alpha and beta subunits, forming the mitochondrial processing protease (MPP) in which subunit alpha is involved in substrate recognition and binding and subunit beta is the catalytic subunit. Component of the ubiquinol-cytochrome c oxidoreductase (cytochrome b-c1 complex, complex III, CIII), a multisubunit enzyme composed of 10 subunits. The complex is composed of 3 respiratory subunits cytochrome b (MT-CYB), cytochrome c1 (CYC1-1 or CYC1-2) and Rieske protein (UCR1-1 or UCR1-2), 2 core protein subunits MPPalpha1 (or MPPalpha2) and MPPB, and 5 low-molecular weight protein subunits QCR7-1 (or QCR7-2), UCRQ-1 (or UCRQ-2), QCR9, UCRY and probably QCR6-1 (or QCR6-2). The complex exists as an obligatory dimer and forms supercomplexes (SCs) in the inner mitochondrial membrane with NADH-ubiquinone oxidoreductase (complex I, CI), resulting in different assemblies (supercomplexes SCI(1)III(2) and SCI(2)III(4)).

The protein resides in the mitochondrion matrix. The protein localises to the mitochondrion inner membrane. In terms of biological role, substrate recognition and binding subunit of the essential mitochondrial processing protease (MPP), which cleaves the mitochondrial sequence off newly imported precursors proteins. Functionally, component of the ubiquinol-cytochrome c oxidoreductase, a multisubunit transmembrane complex that is part of the mitochondrial electron transport chain which drives oxidative phosphorylation. The respiratory chain contains 3 multisubunit complexes succinate dehydrogenase (complex II, CII), ubiquinol-cytochrome c oxidoreductase (cytochrome b-c1 complex, complex III, CIII) and cytochrome c oxidase (complex IV, CIV), that cooperate to transfer electrons derived from NADH and succinate to molecular oxygen, creating an electrochemical gradient over the inner membrane that drives transmembrane transport and the ATP synthase. The cytochrome b-c1 complex catalyzes electron transfer from ubiquinol to cytochrome c, linking this redox reaction to translocation of protons across the mitochondrial inner membrane, with protons being carried across the membrane as hydrogens on the quinol. In the process called Q cycle, 2 protons are consumed from the matrix, 4 protons are released into the intermembrane space and 2 electrons are passed to cytochrome c. In Arabidopsis thaliana (Mouse-ear cress), this protein is Probable mitochondrial-processing peptidase subunit alpha-1, mitochondrial (MPPalpha1).